The chain runs to 826 residues: Zinc phosphodiesterase ELAC protein 2 (826 aa).

The transit peptide at 1–16 directs the protein to the mitochondrion; sequence MWALCSLLRSAAGRTM. Disordered stretches follow at residues 16-51 and 188-231; these read MSQGRTISQAPARRERPRKDPLRHLRTREKRGPSGC and EQRR…VSQR. Residues 27-38 are compositionally biased toward basic and acidic residues; the sequence is ARRERPRKDPLR. 6 positions are modified to phosphoserine: serine 199, serine 208, serine 212, serine 229, serine 618, and serine 736. Basic and acidic residues predominate over residues 208–224; that stretch reads SPERSSDSESNENEPHL. Residues 798-826 are disordered; sequence ELAGGLEDGEPQQKRAHTEEPQAKKVRAQ. Positions 808-820 are enriched in basic and acidic residues; sequence PQQKRAHTEEPQA.

It belongs to the RNase Z family. Homodimer. Interacts with PTCD1. It depends on Zn(2+) as a cofactor.

It localises to the mitochondrion. Its subcellular location is the mitochondrion matrix. It is found in the mitochondrion nucleoid. The protein resides in the nucleus. The catalysed reaction is Endonucleolytic cleavage of RNA, removing extra 3' nucleotides from tRNA precursor, generating 3' termini of tRNAs. A 3'-hydroxy group is left at the tRNA terminus and a 5'-phosphoryl group is left at the trailer molecule.. Its function is as follows. Zinc phosphodiesterase, which displays mitochondrial tRNA 3'-processing endonuclease activity. Involved in tRNA maturation, by removing a 3'-trailer from precursor tRNA. Associates with mitochondrial DNA complexes at the nucleoids to initiate RNA processing and ribosome assembly. This Pan troglodytes (Chimpanzee) protein is Zinc phosphodiesterase ELAC protein 2 (ELAC2).